Consider the following 212-residue polypeptide: uncharacterized protein (212 aa).

The interval 47-129 is disordered; sequence RELLDRRRSQ…GNIDNGQPRR (83 aa).

This is an uncharacterized protein from Caenorhabditis elegans.